The primary structure comprises 325 residues: Glucosyl-3-phosphoglycerate synthase (325 aa).

UDP-alpha-D-glucose is bound by residues 37-41 (PSLNE), S71, K104, and 124-125 (DS). D126 contributes to the Mn(2+) binding site. Residue 171 to 174 (GRVT) coordinates (2R)-3-phosphoglycerate. UDP-alpha-D-glucose-binding positions include 216–219 (YGVE) and 243–248 (RIHDNQ). Mn(2+) is bound at residue H245. N247 lines the (2R)-3-phosphoglycerate pocket.

The protein belongs to the glycosyltransferase 2 family. As to quaternary structure, homodimer in solution. Co(2+) is required as a cofactor. The cofactor is Mg(2+). Requires Mn(2+) as cofactor. Ni(2+) serves as cofactor. It depends on Zn(2+) as a cofactor.

It carries out the reaction an NDP-alpha-D-glucose + (2R)-3-phosphoglycerate = (2R)-2-O-(alpha-D-glucopyranosyl)-3-phospho-glycerate + a ribonucleoside 5'-diphosphate + H(+). The enzyme catalyses (2R)-3-phosphoglycerate + UDP-alpha-D-glucose = (2R)-2-O-(alpha-D-glucopyranosyl)-3-phospho-glycerate + UDP + H(+). It catalyses the reaction ADP-alpha-D-glucose + (2R)-3-phosphoglycerate = (2R)-2-O-(alpha-D-glucopyranosyl)-3-phospho-glycerate + ADP + H(+). With respect to regulation, inhibited by ADP and EDTA. In terms of biological role, involved in the biosynthesis of the compatible solute mannosylglucosylglycerate through a phosphorylating pathway. Catalyzes the transfer of the glucose moiety from a nuleotide sugar such as UDP-alpha-D-glucose to the position 2 of 3-phospho-D-glycerate (3-PGA) to form glucosyl-3-phosphoglycerate (GPG). UDP-glucose is the preferred substrate, but it can be partially replaced by ADP-glucose. This is Glucosyl-3-phosphoglycerate synthase from Petrotoga mobilis (strain DSM 10674 / SJ95).